Here is a 219-residue protein sequence, read N- to C-terminus: Transcriptional regulatory protein QseB (219 aa).

The 115-residue stretch at 2–116 (RILLIEDDML…EVAARLEALM (115 aa)) folds into the Response regulatory domain. Asp51 carries the post-translational modification 4-aspartylphosphate. The ompR/PhoB-type DNA-binding region spans 124–218 (SNELRHGNVM…VHGIGYTLGE (95 aa)).

Post-translationally, phosphorylated by QseC.

It is found in the cytoplasm. Functionally, member of a two-component regulatory system QseB/QseC. Activates the flagella regulon by activating transcription of FlhDC. Currently it is not known whether this effect is direct or not. The protein is Transcriptional regulatory protein QseB (qseB) of Escherichia coli O157:H7.